The chain runs to 379 residues: Lipid-A-disaccharide synthase (379 aa).

Belongs to the LpxB family.

It catalyses the reaction a lipid X + a UDP-2-N,3-O-bis[(3R)-3-hydroxyacyl]-alpha-D-glucosamine = a lipid A disaccharide + UDP + H(+). It functions in the pathway bacterial outer membrane biogenesis; LPS lipid A biosynthesis. Its function is as follows. Condensation of UDP-2,3-diacylglucosamine and 2,3-diacylglucosamine-1-phosphate to form lipid A disaccharide, a precursor of lipid A, a phosphorylated glycolipid that anchors the lipopolysaccharide to the outer membrane of the cell. The sequence is that of Lipid-A-disaccharide synthase from Vibrio campbellii (strain ATCC BAA-1116).